The following is a 602-amino-acid chain: Elongation factor 4 (602 aa).

Residues 7–189 (RNIRNFSIIA…AIVHRIPPPK (183 aa)) form the tr-type G domain. GTP-binding positions include 19 to 24 (DHGKST) and 136 to 139 (NKID).

It belongs to the TRAFAC class translation factor GTPase superfamily. Classic translation factor GTPase family. LepA subfamily.

Its subcellular location is the cell inner membrane. It catalyses the reaction GTP + H2O = GDP + phosphate + H(+). Its function is as follows. Required for accurate and efficient protein synthesis under certain stress conditions. May act as a fidelity factor of the translation reaction, by catalyzing a one-codon backward translocation of tRNAs on improperly translocated ribosomes. Back-translocation proceeds from a post-translocation (POST) complex to a pre-translocation (PRE) complex, thus giving elongation factor G a second chance to translocate the tRNAs correctly. Binds to ribosomes in a GTP-dependent manner. The sequence is that of Elongation factor 4 from Stenotrophomonas maltophilia (strain R551-3).